A 189-amino-acid chain; its full sequence is Crossover junction endodeoxyribonuclease RuvC (189 aa).

Residues Asp8, Glu67, and Asp139 contribute to the active site. Mg(2+)-binding residues include Asp8, Glu67, and Asp139.

It belongs to the RuvC family. In terms of assembly, homodimer which binds Holliday junction (HJ) DNA. The HJ becomes 2-fold symmetrical on binding to RuvC with unstacked arms; it has a different conformation from HJ DNA in complex with RuvA. In the full resolvosome a probable DNA-RuvA(4)-RuvB(12)-RuvC(2) complex forms which resolves the HJ. The cofactor is Mg(2+).

The protein resides in the cytoplasm. It catalyses the reaction Endonucleolytic cleavage at a junction such as a reciprocal single-stranded crossover between two homologous DNA duplexes (Holliday junction).. Functionally, the RuvA-RuvB-RuvC complex processes Holliday junction (HJ) DNA during genetic recombination and DNA repair. Endonuclease that resolves HJ intermediates. Cleaves cruciform DNA by making single-stranded nicks across the HJ at symmetrical positions within the homologous arms, yielding a 5'-phosphate and a 3'-hydroxyl group; requires a central core of homology in the junction. The consensus cleavage sequence is 5'-(A/T)TT(C/G)-3'. Cleavage occurs on the 3'-side of the TT dinucleotide at the point of strand exchange. HJ branch migration catalyzed by RuvA-RuvB allows RuvC to scan DNA until it finds its consensus sequence, where it cleaves and resolves the cruciform DNA. This is Crossover junction endodeoxyribonuclease RuvC from Histophilus somni (strain 129Pt) (Haemophilus somnus).